The following is a 343-amino-acid chain: Multidrug resistance protein MdtN (343 aa).

The Cytoplasmic segment spans residues Met1–Lys12. The chain crosses the membrane as a helical; Signal-anchor for type II membrane protein span at residues Phe13–Val33. At Asp34–Gln343 the chain is on the periplasmic side.

Belongs to the membrane fusion protein (MFP) (TC 8.A.1) family. As to quaternary structure, could be part of a tripartite efflux system composed of MdtN, MdtO and MdtP.

It localises to the cell inner membrane. In terms of biological role, could be involved in resistance to puromycin, acriflavine and tetraphenylarsonium chloride. The sequence is that of Multidrug resistance protein MdtN (mdtN) from Shigella flexneri.